We begin with the raw amino-acid sequence, 164 residues long: FMN reductase (NADH) RutF (164 aa).

Belongs to the non-flavoprotein flavin reductase family. RutF subfamily.

It catalyses the reaction FMNH2 + NAD(+) = FMN + NADH + 2 H(+). Its function is as follows. Catalyzes the reduction of FMN to FMNH2 which is used to reduce pyrimidine by RutA via the Rut pathway. This chain is FMN reductase (NADH) RutF, found in Escherichia coli O81 (strain ED1a).